We begin with the raw amino-acid sequence, 244 residues long: 6-carboxyhexanoate--CoA ligase (244 aa).

The protein belongs to the BioW family. In terms of assembly, homodimer. Requires Mg(2+) as cofactor.

The enzyme catalyses heptanedioate + ATP + CoA = 6-carboxyhexanoyl-CoA + AMP + diphosphate. It functions in the pathway metabolic intermediate metabolism; pimeloyl-CoA biosynthesis; pimeloyl-CoA from pimelate: step 1/1. Catalyzes the transformation of pimelate into pimeloyl-CoA with concomitant hydrolysis of ATP to AMP. This is 6-carboxyhexanoate--CoA ligase from Methanococcus maripaludis (strain C6 / ATCC BAA-1332).